A 486-amino-acid polypeptide reads, in one-letter code: N-succinylglutamate 5-semialdehyde dehydrogenase (486 aa).

Residue 220 to 225 (GSSRTG) coordinates NAD(+). Catalysis depends on residues Glu243 and Cys277.

It belongs to the aldehyde dehydrogenase family. AstD subfamily.

The catalysed reaction is N-succinyl-L-glutamate 5-semialdehyde + NAD(+) + H2O = N-succinyl-L-glutamate + NADH + 2 H(+). The protein operates within amino-acid degradation; L-arginine degradation via AST pathway; L-glutamate and succinate from L-arginine: step 4/5. In terms of biological role, catalyzes the NAD-dependent reduction of succinylglutamate semialdehyde into succinylglutamate. In Shewanella woodyi (strain ATCC 51908 / MS32), this protein is N-succinylglutamate 5-semialdehyde dehydrogenase.